Consider the following 646-residue polypeptide: Threonine--tRNA ligase (646 aa).

A TGS domain is found at 1–63 (MAQISLTFPD…EADAKIAIHT (63 aa)). The catalytic stretch occupies residues 247–544 (DHRKLGKEME…LIENYAGKLP (298 aa)). Cys344, His395, and His521 together coordinate Zn(2+).

It belongs to the class-II aminoacyl-tRNA synthetase family. In terms of assembly, homodimer. Requires Zn(2+) as cofactor.

It localises to the cytoplasm. The enzyme catalyses tRNA(Thr) + L-threonine + ATP = L-threonyl-tRNA(Thr) + AMP + diphosphate + H(+). Functionally, catalyzes the attachment of threonine to tRNA(Thr) in a two-step reaction: L-threonine is first activated by ATP to form Thr-AMP and then transferred to the acceptor end of tRNA(Thr). Also edits incorrectly charged L-seryl-tRNA(Thr). The sequence is that of Threonine--tRNA ligase from Cereibacter sphaeroides (strain ATCC 17025 / ATH 2.4.3) (Rhodobacter sphaeroides).